A 441-amino-acid chain; its full sequence is uncharacterized protein (441 aa).

78-85 is a binding site for ATP; that stretch reads GPRQAGKT.

This is an uncharacterized protein from Mycobacterium bovis (strain ATCC BAA-935 / AF2122/97).